Reading from the N-terminus, the 299-residue chain is DNA-binding transcriptional repressor CapW (299 aa).

A compositionally biased stretch (basic and acidic residues) spans 1-15 (MPDNFREGDKQDSQK). Residues 1-21 (MPDNFREGDKQDSQKGRQGAR) are disordered. The segment at 1 to 95 (MPDNFREGDK…LFQPVYMTSS (95 aa)) is winged HTH domain. The tract at residues 96-207 (LECYLNDLLQ…LSRIVQAQNA (112 aa)) is WYL domain. Positions 131-211 (LRRLDTDVVS…VQAQNAGPDE (81 aa)) constitute a WYL domain. The probable ligand-binding region stretch occupies residues 156 to 200 (YQSMSDPQGSKRTLTPHSLVHDGYRWHTRAWCHKRGEYRDFLLSR). The tract at residues 208-299 (GPDEERANGD…KDEIYALLKQ (92 aa)) is WCX domain.

In terms of assembly, homodimer.

Transcriptional regulator of a CBASS antivirus system. CBASS (cyclic oligonucleotide-based antiphage signaling system) provides immunity against bacteriophage. The CD-NTase protein synthesizes cyclic nucleotides in response to infection; these serve as specific second messenger signals. The signals activate a diverse range of effectors, leading to bacterial cell death and thus abortive phage infection. A type III CBASS system. Expression of this CBASS system (Cap18-Cap6-Cap7-CdnC-CapW-Cap17) in a susceptible E.coli (strain MG1655) confers resistance to bacteriophage P1. Binds specifically to and represses expression from the CBASS promoter, found between the genes for divergently transcribed capW and cdnC. This chain is DNA-binding transcriptional repressor CapW, found in Escherichia coli (strain KTE188).